Here is a 179-residue protein sequence, read N- to C-terminus: MTLASAEKEMAGVLTFFQKETRGFKTGKAHPALVETVTIEVYGTTMRLSDIASISVSDMRQLLISPYDAGTVSAISKGILAANLNLQPIVEGATVRINVPEPTEEYRREVIKQLKRKSEEAKVAIRNIRRTFNDRLKKDDSLTEDAVKSLEKKIQELTDKFCKQIEELAKQKEAELATV.

Belongs to the RRF family.

Its subcellular location is the cytoplasm. In terms of biological role, responsible for the release of ribosomes from messenger RNA at the termination of protein biosynthesis. May increase the efficiency of translation by recycling ribosomes from one round of translation to another. The sequence is that of Ribosome-recycling factor from Chlamydia trachomatis serovar A (strain ATCC VR-571B / DSM 19440 / HAR-13).